Reading from the N-terminus, the 161-residue chain is Dihydrofolate reductase (161 aa).

The DHFR domain occupies 2–161; that stretch reads KISLISAISN…YNFCFEILSR (160 aa). 6 to 8 serves as a coordination point for substrate; it reads ISA. Residues 7 to 8 and 15 to 20 contribute to the NADP(+) site; these read SA and IGHNNK. D28 is a substrate binding site. 44 to 47 serves as a coordination point for NADP(+); the sequence is GRLT. R59 contributes to the substrate binding site. NADP(+)-binding positions include 64-66 and 96-101; these read ISH and IGGSKI. Position 115 (T115) interacts with substrate.

It belongs to the dihydrofolate reductase family.

It catalyses the reaction (6S)-5,6,7,8-tetrahydrofolate + NADP(+) = 7,8-dihydrofolate + NADPH + H(+). The protein operates within cofactor biosynthesis; tetrahydrofolate biosynthesis; 5,6,7,8-tetrahydrofolate from 7,8-dihydrofolate: step 1/1. Key enzyme in folate metabolism. Catalyzes an essential reaction for de novo glycine and purine synthesis, and for DNA precursor synthesis. The protein is Dihydrofolate reductase (folA) of Buchnera aphidicola subsp. Schizaphis graminum (strain Sg).